The sequence spans 249 residues: DNA polymerase sliding clamp (249 aa).

It belongs to the PCNA family. In terms of assembly, homotrimer. The subunits circularize to form a toroid; DNA passes through its center. Replication factor C (RFC) is required to load the toroid on the DNA.

Functionally, sliding clamp subunit that acts as a moving platform for DNA processing. Responsible for tethering the catalytic subunit of DNA polymerase and other proteins to DNA during high-speed replication. The protein is DNA polymerase sliding clamp of Methanococcus vannielii (strain ATCC 35089 / DSM 1224 / JCM 13029 / OCM 148 / SB).